We begin with the raw amino-acid sequence, 513 residues long: ATP synthase subunit alpha 1 (513 aa).

Gly169–Thr176 is a binding site for ATP.

This sequence belongs to the ATPase alpha/beta chains family. As to quaternary structure, F-type ATPases have 2 components, CF(1) - the catalytic core - and CF(0) - the membrane proton channel. CF(1) has five subunits: alpha(3), beta(3), gamma(1), delta(1), epsilon(1). CF(0) has three main subunits: a(1), b(2) and c(9-12). The alpha and beta chains form an alternating ring which encloses part of the gamma chain. CF(1) is attached to CF(0) by a central stalk formed by the gamma and epsilon chains, while a peripheral stalk is formed by the delta and b chains.

It is found in the cell inner membrane. It catalyses the reaction ATP + H2O + 4 H(+)(in) = ADP + phosphate + 5 H(+)(out). Its function is as follows. Produces ATP from ADP in the presence of a proton gradient across the membrane. The alpha chain is a regulatory subunit. The polypeptide is ATP synthase subunit alpha 1 (Photobacterium profundum (strain SS9)).